A 177-amino-acid polypeptide reads, in one-letter code: Probable adenylyl-sulfate kinase (177 aa).

Position 12–19 (12–19) interacts with ATP; it reads GLSGAGKT. Ser-86 serves as the catalytic Phosphoserine intermediate.

It belongs to the APS kinase family.

It carries out the reaction adenosine 5'-phosphosulfate + ATP = 3'-phosphoadenylyl sulfate + ADP + H(+). It participates in sulfur metabolism; hydrogen sulfide biosynthesis; sulfite from sulfate: step 2/3. Catalyzes the synthesis of activated sulfate. The chain is Probable adenylyl-sulfate kinase (cysC) from Synechocystis sp. (strain ATCC 27184 / PCC 6803 / Kazusa).